Consider the following 492-residue polypeptide: Cytochrome P450 2A1 (492 aa).

The residue at position 130 (S130) is a Phosphoserine. Residue C437 participates in heme binding.

It belongs to the cytochrome P450 family. Heme serves as cofactor. In terms of tissue distribution, liver and testis.

It is found in the endoplasmic reticulum membrane. The protein localises to the microsome membrane. The enzyme catalyses an organic molecule + reduced [NADPH--hemoprotein reductase] + O2 = an alcohol + oxidized [NADPH--hemoprotein reductase] + H2O + H(+). In terms of biological role, highly active in the 7-alpha-hydroxylation of testosterone, progesterone and androstenedione. This is Cytochrome P450 2A1 (Cyp2a1) from Rattus norvegicus (Rat).